We begin with the raw amino-acid sequence, 565 residues long: Oxygen-dependent choline dehydrogenase (565 aa).

Position 7-36 (7-36) interacts with FAD; the sequence is DYIICGAGSAGNVLATRLTEDPGVTVLLLE. The Proton acceptor role is filled by H474.

The protein belongs to the GMC oxidoreductase family. It depends on FAD as a cofactor.

The enzyme catalyses choline + A = betaine aldehyde + AH2. It catalyses the reaction betaine aldehyde + NAD(+) + H2O = glycine betaine + NADH + 2 H(+). The protein operates within amine and polyamine biosynthesis; betaine biosynthesis via choline pathway; betaine aldehyde from choline (cytochrome c reductase route): step 1/1. Involved in the biosynthesis of the osmoprotectant glycine betaine. Catalyzes the oxidation of choline to betaine aldehyde and betaine aldehyde to glycine betaine at the same rate. This Burkholderia pseudomallei (strain K96243) protein is Oxygen-dependent choline dehydrogenase.